A 257-amino-acid chain; its full sequence is Ribonuclease HII (257 aa).

An RNase H type-2 domain is found at T72 to K257. A divalent metal cation contacts are provided by D78, E79, and D170.

This sequence belongs to the RNase HII family. Requires Mn(2+) as cofactor. The cofactor is Mg(2+).

The protein localises to the cytoplasm. It catalyses the reaction Endonucleolytic cleavage to 5'-phosphomonoester.. Its function is as follows. Endonuclease that specifically degrades the RNA of RNA-DNA hybrids. This chain is Ribonuclease HII, found in Bacillus anthracis (strain A0248).